The chain runs to 526 residues: Fumitremorgin C synthase (526 aa).

Residues 4-24 form a helical membrane-spanning segment; it reads LPLSPAVLFLIIVLPILYLWI. Cysteine 443 lines the heme pocket.

It belongs to the cytochrome P450 family. Requires heme as cofactor.

It is found in the membrane. The catalysed reaction is tryprostatin A + reduced [NADPH--hemoprotein reductase] + O2 = fumitremorgin C + oxidized [NADPH--hemoprotein reductase] + 2 H2O + H(+). Its pathway is mycotoxin biosynthesis. In terms of biological role, cytochrome P450 monooxygenase; part of the gene cluster that mediates the biosynthesis of fumitremorgins, indole alkaloids that carry not only intriguing chemical structures, but also interesting biological and pharmacological activities. The biosynthesis of fumitremorgin-type alkaloids begins by condensation of the two amino acids L-tryptophan and L-proline to brevianamide F, catalyzed by the non-ribosomal peptide synthetase ftmA. Brevianamide F is then prenylated by the prenyltransferase ftmPT1/ftmB in the presence of dimethylallyl diphosphate, resulting in the formation of tryprostatin B. The three cytochrome P450 monooxygenases, ftmP450-1/ftmC, ftmP450-2/ftmE and ftmP450-3/FtmG, are responsible for the conversion of tryprostatin B to 6-hydroxytryprostatin B, tryprostatin A to fumitremorgin C and fumitremorgin C to 12,13-dihydroxyfumitremorgin C, respectively. The putative methyltransferase ftmMT/ftmD is expected for the conversion of 6-hydroxytryprostatin B to tryprostatin A. FtmPT2/FtmH catalyzes the prenylation of 12,13-dihydroxyfumitre-morgin C in the presence of dimethylallyl diphosphate, resulting in the formation of fumitremorgin B. Fumitremorgin B is further converted to verruculogen by ftmOx1/ftmF via the insertion of an endoperoxide bond between the two prenyl moieties. In some fungal species, verruculogen is further converted to fumitremorgin A, but the enzymes involved in this step have not been identified yet. The polypeptide is Fumitremorgin C synthase (Aspergillus fumigatus (Neosartorya fumigata)).